The chain runs to 86 residues: Large ribosomal subunit protein eL43 (86 aa).

Positions 38, 41, 56, and 59 each coordinate Zn(2+). The C4-type zinc finger occupies 38-59 (CPVCGRKAVRRISTGIWQCQKC).

This sequence belongs to the eukaryotic ribosomal protein eL43 family. As to quaternary structure, part of the 50S ribosomal subunit. It depends on Zn(2+) as a cofactor.

The chain is Large ribosomal subunit protein eL43 from Thermococcus kodakarensis (strain ATCC BAA-918 / JCM 12380 / KOD1) (Pyrococcus kodakaraensis (strain KOD1)).